Consider the following 1529-residue polypeptide: Ras guanine nucleotide exchange factor B (1529 aa).

Positions 135–186 form a coiled coil; sequence ISNIEKQLSNLVNLKSNTTEQTDRKYKTNLIDFKESIIQLEKDCKNLLKQSN. Disordered stretches follow at residues 290-357, 576-600, 680-724, 847-948, and 1168-1206; these read INTL…ISIN, TTTT…KSSH, KRNT…HIQQ, MGKE…NHNR, and QPPQ…STNL. Low complexity-rich tracts occupy residues 576–591, 683–724, and 853–887; these read TTTT…TTTN, TSSG…HIQQ, and NSNT…NNNE. Coiled coils occupy residues 722 to 798 and 871 to 898; these read IQQI…LNRK and NNNN…ETNK. The span at 888–898 shows a compositional bias: basic and acidic residues; sequence NKNENKNETNK. 4 stretches are compositionally biased toward low complexity: residues 906–916, 924–940, 1168–1187, and 1197–1206; these read SSTSTLSSSTT, SSTN…LLPP, QPPQ…TTQP, and QPQLQQSTNL. An N-terminal Ras-GEF domain is found at 1075 to 1205; it reads FYRSIKYASL…PQPQLQQSTN (131 aa). In terms of domain architecture, Ras-GEF spans 1282 to 1517; that stretch reads SSTDIAEQLT…YEQSILLEPK (236 aa).

The protein localises to the cytoplasm. In terms of biological role, promotes the exchange of Ras-bound GDP by GTP. Involved in phagocytosis, fluid-phase endocytosis, regulation of macropinocytosis and control of cell movement. The chain is Ras guanine nucleotide exchange factor B (gefB) from Dictyostelium discoideum (Social amoeba).